The sequence spans 489 residues: GTPase Der (489 aa).

EngA-type G domains follow at residues 30 to 199 and 227 to 403; these read PVVS…KDKP and FRLA…SRSH. GTP contacts are provided by residues 36–43, 85–89, 151–154, 233–240, 280–284, and 345–348; these read GRQNVGKS, DTPGL, NKAD, GKPNSGKS, DTAGI, and NKWD. Residues 404–488 form the KH-like domain; the sequence is RKVSTSELNK…PIRLEFRSDR (85 aa).

It belongs to the TRAFAC class TrmE-Era-EngA-EngB-Septin-like GTPase superfamily. EngA (Der) GTPase family. Associates with the 50S ribosomal subunit.

Its function is as follows. GTPase that plays an essential role in the late steps of ribosome biogenesis. This is GTPase Der from Leptospira interrogans serogroup Icterohaemorrhagiae serovar Lai (strain 56601).